Here is a 453-residue protein sequence, read N- to C-terminus: Chromosomal replication initiator protein DnaA (453 aa).

The tract at residues 1–71 (MSEKEIWEKV…QAILFDVVGY (71 aa)) is domain I, interacts with DnaA modulators. The domain II stretch occupies residues 71–114 (YEVKPHFITTEELANYSNNETATPKETTKPSTETTEDNHVLGRE). The domain III, AAA+ region stretch occupies residues 115–331 (QFNAHNTFDT…GALTRLLAYS (217 aa)). The ATP site is built by Gly159, Gly161, Lys162, and Thr163. The interval 332–453 (QLLGKPITTE…ENLEKEIRNV (122 aa)) is domain IV, binds dsDNA.

The protein belongs to the DnaA family. Oligomerizes as a right-handed, spiral filament on DNA at oriC.

It localises to the cytoplasm. Its function is as follows. Plays an essential role in the initiation and regulation of chromosomal replication. ATP-DnaA binds to the origin of replication (oriC) to initiate formation of the DNA replication initiation complex once per cell cycle. Binds the DnaA box (a 9 base pair repeat at the origin) and separates the double-stranded (ds)DNA. Forms a right-handed helical filament on oriC DNA; dsDNA binds to the exterior of the filament while single-stranded (ss)DNA is stabiized in the filament's interior. The ATP-DnaA-oriC complex binds and stabilizes one strand of the AT-rich DNA unwinding element (DUE), permitting loading of DNA polymerase. After initiation quickly degrades to an ADP-DnaA complex that is not apt for DNA replication. Binds acidic phospholipids. The protein is Chromosomal replication initiator protein DnaA of Staphylococcus aureus (strain Mu3 / ATCC 700698).